The following is a 362-amino-acid chain: Phosphoserine aminotransferase (362 aa).

L-glutamate contacts are provided by S9 and R42. Residues 76–77 (GR), W102, T153, D174, and Q197 each bind pyridoxal 5'-phosphate. Position 198 is an N6-(pyridoxal phosphate)lysine (K198). Residue 239 to 240 (NT) participates in pyridoxal 5'-phosphate binding.

This sequence belongs to the class-V pyridoxal-phosphate-dependent aminotransferase family. SerC subfamily. As to quaternary structure, homodimer. Pyridoxal 5'-phosphate serves as cofactor.

The protein localises to the cytoplasm. The catalysed reaction is O-phospho-L-serine + 2-oxoglutarate = 3-phosphooxypyruvate + L-glutamate. It catalyses the reaction 4-(phosphooxy)-L-threonine + 2-oxoglutarate = (R)-3-hydroxy-2-oxo-4-phosphooxybutanoate + L-glutamate. It participates in amino-acid biosynthesis; L-serine biosynthesis; L-serine from 3-phospho-D-glycerate: step 2/3. Its pathway is cofactor biosynthesis; pyridoxine 5'-phosphate biosynthesis; pyridoxine 5'-phosphate from D-erythrose 4-phosphate: step 3/5. Catalyzes the reversible conversion of 3-phosphohydroxypyruvate to phosphoserine and of 3-hydroxy-2-oxo-4-phosphonooxybutanoate to phosphohydroxythreonine. The sequence is that of Phosphoserine aminotransferase from Escherichia fergusonii (strain ATCC 35469 / DSM 13698 / CCUG 18766 / IAM 14443 / JCM 21226 / LMG 7866 / NBRC 102419 / NCTC 12128 / CDC 0568-73).